Reading from the N-terminus, the 453-residue chain is uncharacterized protein (453 aa).

This sequence to yeast RIT1.

This is an uncharacterized protein from Schizosaccharomyces pombe (strain 972 / ATCC 24843) (Fission yeast).